The primary structure comprises 1413 residues: Zinc finger SWIM domain-containing protein 8 (1413 aa).

A phosphoserine mark is found at Ser36, Ser48, and Ser53. The tract at residues 45 to 65 is disordered; sequence RKQSAGPNSPTGGGGGGGSGG. Over residues 55–65 the composition is skewed to gly residues; it reads TGGGGGGGSGG. Residues 172–208 form an SWIM-type zinc finger; that stretch reads YNVAVMFDRCRVTSCSCTCGAGAKWCTHVVALCLFRI. The interval 600-817 is disordered; sequence ESQTHKPQTL…ESHAPHVPNQ (218 aa). A compositionally biased stretch (polar residues) spans 604–625; it reads HKPQTLSSFYSSSRPATASQRS. The span at 704–715 shows a compositional bias: gly residues; that stretch reads SRGGYNGRGWGS. Thr724 is modified (phosphothreonine). Positions 729–744 are enriched in polar residues; that stretch reads IDSSAPETTSDSSPTL. A phosphoserine mark is found at Ser738, Ser741, and Ser745. The segment covering 759-794 has biased composition (low complexity); the sequence is GRGQDSDSISSSSSDSLGSSSSSGSRRASASGGARA. Basic and acidic residues predominate over residues 795–811; the sequence is KTVEVGRYKGRRPESHA. Residues Ser852 and Ser1412 each carry the phosphoserine modification.

Belongs to the ZSWIM8 family. Component of the SCF-like E3 ubiquitin-protein ligase complex which contains CUL3, RBX1, ELOB, ELOC and ZSWIM8. Interacts with DAB1.

The protein localises to the cytoplasm. It localises to the cytosol. The protein operates within protein modification; protein ubiquitination. In terms of biological role, substrate recognition component of a SCF-like E3 ubiquitin-protein ligase complex that promotes target-directed microRNA degradation (TDMD), a process that mediates degradation of microRNAs (miRNAs). The SCF-like E3 ubiquitin-protein ligase complex acts by catalyzing ubiquitination and subsequent degradation of AGO proteins (AGO1, AGO2, AGO3 and/or AGO4), thereby exposing miRNAs for degradation. Specifically recognizes and binds AGO proteins when they are engaged with a TDMD target. May also acts as a regulator of axon guidance: specifically recognizes misfolded ROBO3 and promotes its ubiquitination and subsequent degradation. Plays an essential role for proper embryonic development of heart and lung. Controls protein quality of DAB1, a key signal molecule for brain development, thus protecting its signaling strength. Mechanistically, recognizes intrinsically disordered regions of DAB1 and eliminates misfolded DAB1 that cannot be properly phosphorylated. This is Zinc finger SWIM domain-containing protein 8 from Bos taurus (Bovine).